Reading from the N-terminus, the 323-residue chain is Glucokinase (323 aa).

8–13 (GDVGGT) serves as a coordination point for ATP.

The protein belongs to the bacterial glucokinase family.

It localises to the cytoplasm. It catalyses the reaction D-glucose + ATP = D-glucose 6-phosphate + ADP + H(+). This chain is Glucokinase, found in Yersinia enterocolitica serotype O:8 / biotype 1B (strain NCTC 13174 / 8081).